The chain runs to 582 residues: Formate--tetrahydrofolate ligase (582 aa).

65–72 (TPLGEGKT) contacts ATP.

This sequence belongs to the formate--tetrahydrofolate ligase family.

It carries out the reaction (6S)-5,6,7,8-tetrahydrofolate + formate + ATP = (6R)-10-formyltetrahydrofolate + ADP + phosphate. It functions in the pathway one-carbon metabolism; tetrahydrofolate interconversion. In Vibrio vulnificus (strain CMCP6), this protein is Formate--tetrahydrofolate ligase.